We begin with the raw amino-acid sequence, 141 residues long: Lutropin subunit beta (141 aa).

An N-terminal signal peptide occupies residues Met1 to Ala20. Disulfide bonds link Cys29–Cys77, Cys43–Cys92, Cys54–Cys108, Cys58–Cys110, and Cys113–Cys120. An N-linked (GlcNAc...) asparagine glycan is attached at Asn33.

The protein belongs to the glycoprotein hormones subunit beta family. As to quaternary structure, heterodimer of a common alpha chain and a unique beta chain which confers biological specificity to thyrotropin, lutropin, follitropin and gonadotropin.

The protein resides in the secreted. Promotes spermatogenesis and ovulation by stimulating the testes and ovaries to synthesize steroids. This is Lutropin subunit beta (Lhb) from Mus musculus (Mouse).